Consider the following 33-residue polypeptide: Natriuretic peptide NP2 (33 aa).

An intrachain disulfide couples Cys-10 to Cys-26.

Expressed by the venom gland.

The protein resides in the secreted. Functionally, snake venom natriuretic peptide that shows an increase in perfusion pressure, urinary flow and glomerular filtration rate. Reduces total and proximal tubular transport of sodium. In the aortic ring assay, causes a relaxant effect in endothelium-intact thoracic aortic rings precontracted with phenylephrine in the presence and absence of isatin, a natriuretic receptor antagonist. In Crotalus durissus cascavella (Northeastern Brazilian rattlesnake), this protein is Natriuretic peptide NP2.